The chain runs to 172 residues: Fimbrial-like protein FimF (172 aa).

The first 21 residues, 1–21 (MILRRVFIAIGCVLFSPLSQA), serve as a signal peptide directing secretion. C41 and C81 form a disulfide bridge.

It belongs to the fimbrial protein family.

The protein resides in the fimbrium. This chain is Fimbrial-like protein FimF (fimF), found in Salmonella typhimurium (strain LT2 / SGSC1412 / ATCC 700720).